The following is a 113-amino-acid chain: MDGRVQLMKALLAGPLRPAARRWRNPIPFPETFDGDTDRLPEFIVQTSSYMFVDENTFSNDALKVTFLITRLTGPALQWVIPYIRKESPLLNDYRGFLAEMKRVFGWEEDEDF.

The protein belongs to the FAM127 family.

This Homo sapiens (Human) protein is Retrotransposon Gag-like protein 8A.